Consider the following 291-residue polypeptide: ATP synthase gamma chain (291 aa).

This sequence belongs to the ATPase gamma chain family. F-type ATPases have 2 components, CF(1) - the catalytic core - and CF(0) - the membrane proton channel. CF(1) has five subunits: alpha(3), beta(3), gamma(1), delta(1), epsilon(1). CF(0) has three main subunits: a, b and c.

It is found in the cell inner membrane. Produces ATP from ADP in the presence of a proton gradient across the membrane. The gamma chain is believed to be important in regulating ATPase activity and the flow of protons through the CF(0) complex. The polypeptide is ATP synthase gamma chain (Neisseria gonorrhoeae (strain NCCP11945)).